Here is a 374-residue protein sequence, read N- to C-terminus: Peptide chain release factor 2 (374 aa).

An N5-methylglutamine modification is found at Q248.

Belongs to the prokaryotic/mitochondrial release factor family. Methylated by PrmC. Methylation increases the termination efficiency of RF2.

It localises to the cytoplasm. In terms of biological role, peptide chain release factor 2 directs the termination of translation in response to the peptide chain termination codons UGA and UAA. The sequence is that of Peptide chain release factor 2 from Thermomicrobium roseum (strain ATCC 27502 / DSM 5159 / P-2).